Consider the following 155-residue polypeptide: Archaemetzincin (155 aa).

Residue His-109 coordinates Zn(2+). Glu-110 acts as the Proton acceptor in catalysis. Zn(2+) is bound by residues His-113, His-119, Cys-120, Cys-125, Cys-144, and Cys-147.

The protein belongs to the peptidase M54 family. As to quaternary structure, monomer. It depends on Zn(2+) as a cofactor.

Its function is as follows. Probable zinc metalloprotease whose natural substrate is unknown. This is Archaemetzincin from Pyrobaculum aerophilum (strain ATCC 51768 / DSM 7523 / JCM 9630 / CIP 104966 / NBRC 100827 / IM2).